The chain runs to 324 residues: HTH-type transcriptional regulator CysB (324 aa).

In terms of domain architecture, HTH lysR-type spans 1 to 59 (MKLQQLRYIVEVVNHNLNVSSTAEGLYTSQPGISKQVRMLEDELGIQIFSRSGKHLTQV). The segment at residues 19–38 (VSSTAEGLYTSQPGISKQVR) is a DNA-binding region (H-T-H motif).

The protein belongs to the LysR transcriptional regulatory family. In terms of assembly, homotetramer.

Its subcellular location is the cytoplasm. This protein is a positive regulator of gene expression for the cysteine regulon. The inducer for CysB is N-acetylserine. The sequence is that of HTH-type transcriptional regulator CysB (cysB) from Escherichia coli O157:H7.